An 803-amino-acid polypeptide reads, in one-letter code: Cation channel sperm-associated auxiliary subunit delta (803 aa).

An N-terminal signal peptide occupies residues 1 to 15; that stretch reads MLMLMLAAVATVVRA. Topologically, residues 16–720 are extracellular; the sequence is QTVCRFRTVR…ALPVAEFRPM (705 aa). Disulfide bonds link Cys19/Cys365, Cys55/Cys142, Cys141/Cys148, Cys383/Cys492, Cys506/Cys698, Cys521/Cys568, and Cys620/Cys648. N-linked (GlcNAc...) asparagine glycans are attached at residues Asn226, Asn418, Asn436, Asn468, Asn534, Asn545, and Asn626. A helical transmembrane segment spans residues 721–742; sequence TSILLMVTVTLFTMWLAYAIPK. Residues 743-803 are Cytoplasmic-facing; it reads QLRTERGRRL…QIGKKPDIKK (61 aa). Positions 782–803 are disordered; that stretch reads SRRVKDQPEKIPQIGKKPDIKK.

It belongs to the CATSPERD family. Component of the CatSper complex or CatSpermasome composed of the core pore-forming members CATSPER1, CATSPER2, CATSPER3 and CATSPER4 as well as auxiliary members CATSPERB, CATSPERG, CATSPERD, CATSPERE, CATSPERZ, C2CD6/CATSPERT, SLCO6C1, TMEM249, TMEM262 and EFCAB9. HSPA1 may be an additional auxiliary complex member. The core complex members CATSPER1, CATSPER2, CATSPER3 and CATSPER4 form a heterotetrameric channel. The auxiliary CATSPERB, CATSPERG, CATSPERD and CATSPERE subunits form a pavilion-like structure over the pore which stabilizes the complex through interactions with CATSPER4, CATSPER3, CATSPER1 and CATSPER2 respectively. SLCO6C1 interacts with CATSPERE and TMEM262/CATSPERH interacts with CATSPERB, further stabilizing the complex. C2CD6/CATSPERT interacts at least with CATSPERD and is required for targeting the CatSper complex in the flagellar membrane.

It is found in the cell projection. The protein resides in the cilium. The protein localises to the flagellum membrane. Functionally, auxiliary component of the CatSper complex, a complex involved in sperm cell hyperactivation. Sperm cell hyperactivation is needed for sperm motility which is essential late in the preparation of sperm for fertilization. Required for CATSPER1 stability before intraflagellar transport and/or incorporation of the CatSper complex channel into the flagellar membrane. The sequence is that of Cation channel sperm-associated auxiliary subunit delta from Rattus norvegicus (Rat).